The sequence spans 65 residues: Large ribosomal subunit protein bL35 (65 aa).

This sequence belongs to the bacterial ribosomal protein bL35 family.

This is Large ribosomal subunit protein bL35 from Laribacter hongkongensis (strain HLHK9).